A 129-amino-acid chain; its full sequence is Dynein 14 kDa light chain, flagellar outer arm (129 aa).

Residues A2–G109 form the Thioredoxin domain. An intrachain disulfide couples C34 to C37. Residues L107–S129 are disordered. The span at P117 to S129 shows a compositional bias: low complexity.

In terms of assembly, consists of at least 3 heavy chains (alpha, beta and gamma), 2 intermediate chains and 8 light chains.

The protein localises to the cell projection. It is found in the cilium. It localises to the flagellum. Its subcellular location is the cytoplasm. The protein resides in the cytoskeleton. The protein localises to the flagellum axoneme. In terms of biological role, may be involved in regulating the redox state of functionally important thiol groups within dynein. This Chlamydomonas reinhardtii (Chlamydomonas smithii) protein is Dynein 14 kDa light chain, flagellar outer arm.